Consider the following 497-residue polypeptide: MORN repeat-containing protein 1 (497 aa).

Residues 1–27 are disordered; that stretch reads MAAAGEGTPSSRGPRRDPPRRPPRNGY. MORN repeat units follow at residues 39 to 61, 62 to 84, 86 to 108, 109 to 131, 132 to 154, 155 to 177, and 178 to 200; these read YEGE…DGSY, YEGA…WSGD, FSGQ…AGGC, YEGE…DGQV, YQGS…NGDK, YDGD…DGST, and YKGQ…SGVT. Disordered stretches follow at residues 393 to 425 and 468 to 497; these read GGRS…ATEE and QPPH…PAPR.

This chain is MORN repeat-containing protein 1 (MORN1), found in Homo sapiens (Human).